The sequence spans 279 residues: 4-diphosphocytidyl-2-C-methyl-D-erythritol kinase (279 aa).

The active site involves Lys9. 92 to 102 contacts ATP; sequence PLAAGLGGGSS. Residue Asp134 is part of the active site.

The protein belongs to the GHMP kinase family. IspE subfamily.

It carries out the reaction 4-CDP-2-C-methyl-D-erythritol + ATP = 4-CDP-2-C-methyl-D-erythritol 2-phosphate + ADP + H(+). Its pathway is isoprenoid biosynthesis; isopentenyl diphosphate biosynthesis via DXP pathway; isopentenyl diphosphate from 1-deoxy-D-xylulose 5-phosphate: step 3/6. Functionally, catalyzes the phosphorylation of the position 2 hydroxy group of 4-diphosphocytidyl-2C-methyl-D-erythritol. The polypeptide is 4-diphosphocytidyl-2-C-methyl-D-erythritol kinase (Syntrophus aciditrophicus (strain SB)).